Here is a 338-residue protein sequence, read N- to C-terminus: Protein REG2 (338 aa).

Residues 1-21 (MTLSNCDSLDNLFQDPPEEEE) form a disordered region.

Functionally, regulatory subunit, binds to type-1 protein phosphatase. Functions with HEX2/REG1 and SNF1 protein kinase to regulate growth. Might regulate SNF1 directly or indirectly. The polypeptide is Protein REG2 (REG2) (Saccharomyces cerevisiae (strain ATCC 204508 / S288c) (Baker's yeast)).